Here is a 490-residue protein sequence, read N- to C-terminus: Stomatal closure-related actin-binding protein 3 (490 aa).

Belongs to the SCAB family. Expressed in roots, stems, leaves, siliques and flowers.

It localises to the cytoplasm. It is found in the cytoskeleton. Probable plant-specific actin binding protein that bundles and stabilizes microfilaments (MFs). The polypeptide is Stomatal closure-related actin-binding protein 3 (Arabidopsis thaliana (Mouse-ear cress)).